We begin with the raw amino-acid sequence, 1007 residues long: Bifunctional glutamine synthetase adenylyltransferase/adenylyl-removing enzyme (1007 aa).

Residues 1–496 (MTREQLSLTV…LHERLFYRPL (496 aa)) form an adenylyl removase region. The adenylyl transferase stretch occupies residues 505–1007 (NEDARLSGEA…GPPQRPATTA (503 aa)).

It belongs to the GlnE family. The cofactor is Mg(2+).

It carries out the reaction [glutamine synthetase]-O(4)-(5'-adenylyl)-L-tyrosine + phosphate = [glutamine synthetase]-L-tyrosine + ADP. The catalysed reaction is [glutamine synthetase]-L-tyrosine + ATP = [glutamine synthetase]-O(4)-(5'-adenylyl)-L-tyrosine + diphosphate. Functionally, involved in the regulation of glutamine synthetase GlnA, a key enzyme in the process to assimilate ammonia. When cellular nitrogen levels are high, the C-terminal adenylyl transferase (AT) inactivates GlnA by covalent transfer of an adenylyl group from ATP to specific tyrosine residue of GlnA, thus reducing its activity. Conversely, when nitrogen levels are low, the N-terminal adenylyl removase (AR) activates GlnA by removing the adenylyl group by phosphorolysis, increasing its activity. The regulatory region of GlnE binds the signal transduction protein PII (GlnB) which indicates the nitrogen status of the cell. The polypeptide is Bifunctional glutamine synthetase adenylyltransferase/adenylyl-removing enzyme (Leifsonia xyli subsp. xyli (strain CTCB07)).